The primary structure comprises 117 residues: Large ribosomal subunit protein uL18 (117 aa).

This sequence belongs to the universal ribosomal protein uL18 family. Part of the 50S ribosomal subunit; part of the 5S rRNA/L5/L18/L25 subcomplex. Contacts the 5S and 23S rRNAs.

This is one of the proteins that bind and probably mediate the attachment of the 5S RNA into the large ribosomal subunit, where it forms part of the central protuberance. In Polynucleobacter asymbioticus (strain DSM 18221 / CIP 109841 / QLW-P1DMWA-1) (Polynucleobacter necessarius subsp. asymbioticus), this protein is Large ribosomal subunit protein uL18.